A 636-amino-acid chain; its full sequence is Protein cueball (636 aa).

The first 27 residues, Met1–Ala27, serve as a signal peptide directing secretion. Over Ser28–Gly517 the chain is Extracellular. Asn83 and Asn109 each carry an N-linked (GlcNAc...) asparagine glycan. LDL-receptor class B repeat units lie at residues Arg122–Arg169, Arg170–Ser214, and Asp215–Thr260. Asn190 carries an N-linked (GlcNAc...) asparagine glycan. Asn285 and Asn339 each carry an N-linked (GlcNAc...) asparagine glycan. 2 EGF-like domains span residues Arg350 to Glu384 and Glu419 to Glu456. 5 disulfide bridges follow: Cys359-Cys372, Cys374-Cys383, Cys423-Cys433, Cys427-Cys444, and Cys446-Cys455. 3 N-linked (GlcNAc...) asparagine glycosylation sites follow: Asn449, Asn458, and Asn493. The helical transmembrane segment at Ser518 to Val538 threads the bilayer. Over His539–Thr636 the chain is Cytoplasmic.

It belongs to the cueball family.

It is found in the cell membrane. Its function is as follows. Has a role in spermatogenesis and oogenesis. This chain is Protein cueball, found in Drosophila virilis (Fruit fly).